The sequence spans 358 residues: Phospho-N-acetylmuramoyl-pentapeptide-transferase (358 aa).

Transmembrane regions (helical) follow at residues 27 to 47 (IYAM…VIRV), 73 to 93 (TMGG…WADL), 97 to 117 (YIWT…VDDY), 134 to 154 (MFWQ…KPGF), 170 to 190 (LWFW…NAVN), 197 to 217 (GLAI…SYVA), 233 to 253 (GAGE…GFLW), 261 to 281 (VFMG…IAVI), 286 to 306 (ILLV…IFQV), and 335 to 355 (KIIV…ISTL).

Belongs to the glycosyltransferase 4 family. MraY subfamily. It depends on Mg(2+) as a cofactor.

The protein localises to the cell inner membrane. The catalysed reaction is UDP-N-acetyl-alpha-D-muramoyl-L-alanyl-gamma-D-glutamyl-meso-2,6-diaminopimeloyl-D-alanyl-D-alanine + di-trans,octa-cis-undecaprenyl phosphate = di-trans,octa-cis-undecaprenyl diphospho-N-acetyl-alpha-D-muramoyl-L-alanyl-D-glutamyl-meso-2,6-diaminopimeloyl-D-alanyl-D-alanine + UMP. It functions in the pathway cell wall biogenesis; peptidoglycan biosynthesis. Functionally, catalyzes the initial step of the lipid cycle reactions in the biosynthesis of the cell wall peptidoglycan: transfers peptidoglycan precursor phospho-MurNAc-pentapeptide from UDP-MurNAc-pentapeptide onto the lipid carrier undecaprenyl phosphate, yielding undecaprenyl-pyrophosphoryl-MurNAc-pentapeptide, known as lipid I. This chain is Phospho-N-acetylmuramoyl-pentapeptide-transferase, found in Pelobacter propionicus (strain DSM 2379 / NBRC 103807 / OttBd1).